The sequence spans 530 residues: MSQLDTTTPSGDYLMALDAGTGSVRAVIFDLNGNQIAAGQAEWLHLPVPDVPGSMEFDLTTNWQLTCQCIRQALHLAKLPASAIRAVAACSMREGIVLYDRSGTPIWACANVDARASREVSELKELHNNGFELEVYQCSGQTLALSAMPRLLWLAHYRPDIYRQAGTLTMISDWLANMLSGELAVDPSNAGTTGMLDLVTRNWQPNLLEMAGLRADILSPVKETGTLLGHVTAKAAQECGLLAGTPVVMGGGDVQLGCLGLGVVHAGQTAVLGGTFWQQVVNLPQPIIDPNMNTRINPHVIPGMVQAESISFFTGLTMRWFRDAFCAEEKLLAQRLGIDTYSLLEDMAARVPAGAYGVMPIFSDVMRFKSWYHAAPSFINLSLDPEKCNKATLFRALEENAAIVSACNLAQIAEFSGVKASSVVFAGGGAKGKLWSQILADVTGVPVKVPVVKEATALGCAIAAGVGVGLYEALDKTGERLVRWEREYIPNTEHKALYQAAKTNWQAVYTDQLGLVDCGLTTSLWKAPGL.

It belongs to the FGGY kinase family.

It is found in the cytoplasm. The catalysed reaction is (S)-4,5-dihydroxypentane-2,3-dione + ATP = (2S)-2-hydroxy-3,4-dioxopentyl phosphate + ADP + H(+). Functionally, catalyzes the phosphorylation of autoinducer-2 (AI-2) to phospho-AI-2, which subsequently inactivates the transcriptional regulator LsrR and leads to the transcription of the lsr operon. Phosphorylates the ring-open form of (S)-4,5-dihydroxypentane-2,3-dione (DPD), which is the precursor to all AI-2 signaling molecules, at the C5 position. This chain is Autoinducer-2 kinase, found in Yersinia pseudotuberculosis serotype O:1b (strain IP 31758).